The following is a 487-amino-acid chain: MFRQLKKNLVATLIAALALGQVAPAFADPADTLPDMGTSAGSTLSIGQEMQMGDFYVRQLRGSAPLINDPLLVQYINALGMRLVSHADSVKTPFHFFLINNDEINAFAFFGGNVVLHSALFRYADNESQLASVMAHEISHVTQRHLARAMEDQKRSAPLTWVGALGSILLAMASPQAGMAALTGTLAGTRQGMISFTQQNEQEADRIGIQVLQRAGFDPQAMPSFLEKLLDQARYSTRPPEILLTHPLPESRLADARNRANQMRPVVVQSSADFYFAKARALGMYNSGRNQLTSDLLDQWSKGNVRQQHAAQYGRALQAMEASKYDEARKTLQPLLSAEPNNAWYLDLATDIDLGQKRANDAINRLKNARDLRVNPVLQLNLANAYLQGGQPKAAETILNRYTFSHKDDGNGWDLLAQAEAALNNRDQELAARAESYALAGRLDQAISLLSSASAQAKLGSQQQARYDARIDQLRQLQERFKPYTKM.

Residues 1–27 (MFRQLKKNLVATLIAALALGQVAPAFA) form the signal peptide. His136 lines the Zn(2+) pocket. Residue Glu137 is part of the active site. 2 residues coordinate Zn(2+): His140 and Glu201. The active-site Proton donor is the Asp205. 2 TPR repeats span residues 309–342 (HAAQ…EPNN) and 427–460 (DQEL…AKLG).

Belongs to the peptidase M48 family. BepA subfamily. Zn(2+) serves as cofactor.

The protein resides in the periplasm. Its function is as follows. Functions both as a chaperone and a metalloprotease. Maintains the integrity of the outer membrane by promoting either the assembly or the elimination of outer membrane proteins, depending on their folding state. This chain is Beta-barrel assembly-enhancing protease, found in Salmonella typhi.